Here is a 206-residue protein sequence, read N- to C-terminus: Ion-translocating oxidoreductase complex subunit G (206 aa).

A helical transmembrane segment spans residues 9-29; the sequence is GITLALFAAGSTGLTAVINQM. At threonine 174 the chain carries FMN phosphoryl threonine.

The protein belongs to the RnfG family. As to quaternary structure, the complex is composed of six subunits: RsxA, RsxB, RsxC, RsxD, RsxE and RsxG. FMN is required as a cofactor.

The protein resides in the cell inner membrane. Functionally, part of a membrane-bound complex that couples electron transfer with translocation of ions across the membrane. Required to maintain the reduced state of SoxR. The protein is Ion-translocating oxidoreductase complex subunit G of Salmonella typhi.